The chain runs to 198 residues: Suppressor of cytokine signaling 2 (198 aa).

A disordered region spans residues 1 to 29; that stretch reads MTLRCLEPSGNGADRTRSQWGTAGLPEEQ. Positions 1 to 75 are interaction with AREL1; that stretch reads MTLRCLEPSG…PEGTFLIRDS (75 aa). Phosphoserine is present on Ser-30. Residues 48–156 form the SH2 domain; the sequence is WYWGSMTVNE…TVHLYLTKPL (109 aa). Position 52 is a phosphoserine; by PKC (Ser-52). The region spanning 151–197 is the SOCS box domain; it reads YLTKPLYTSAPTLQHFCRLAINKCTGTIWGLPLPTRLKDYLEEYKFQ. Lys-173 participates in a covalent cross-link: Glycyl lysine isopeptide (Lys-Gly) (interchain with G-Cter in ubiquitin).

Substrate-recognition component of the ECS(SOCS2) complex, composed of SOCS2, CUL5, ELOB, ELOC and RNF7/RBX2. Interacts with IGF1R. Interacts with DCUN1D1. Ubiquitinated; mediated by AREL1 and leading to its subsequent proteasomal degradation. Ubiquitination is dependent on phosphorylation at Ser-52, by PKC and is stimulated by LPS. Post-translationally, phosphorylation at Ser-52 by PKC facilitates its ubiquitination and proteasomal degradation. As to expression, expressed primarily in the testis, some expression in liver and lung.

It localises to the cytoplasm. It participates in protein modification; protein ubiquitination. In terms of biological role, substrate-recognition component of a cullin-5-RING E3 ubiquitin-protein ligase complex (ECS complex, also named CRL5 complex), which mediates the ubiquitination and subsequent proteasomal degradation of target proteins, such as EPOR and GHR. Specifically recognizes and binds phosphorylated proteins via its SH2 domain, promoting their ubiquitination. The ECS(SOCS2) complex acts as a key regulator of growth hormone receptor (GHR) levels by mediating ubiquitination and degradation of GHR, following GHR phosphorylation by JAK2. The ECS(SOCS2) also catalyzes ubiquitination and degradation of JAK2-phosphorylated EPOR. In Mus musculus (Mouse), this protein is Suppressor of cytokine signaling 2.